A 429-amino-acid chain; its full sequence is Enolase (429 aa).

Gln-163 serves as a coordination point for (2R)-2-phosphoglycerate. Glu-205 (proton donor) is an active-site residue. The Mg(2+) site is built by Asp-242, Glu-287, and Asp-314. The (2R)-2-phosphoglycerate site is built by Lys-339, Arg-368, Ser-369, and Lys-390. Lys-339 functions as the Proton acceptor in the catalytic mechanism.

It belongs to the enolase family. It depends on Mg(2+) as a cofactor.

The protein resides in the cytoplasm. It localises to the secreted. It is found in the cell surface. The enzyme catalyses (2R)-2-phosphoglycerate = phosphoenolpyruvate + H2O. The protein operates within carbohydrate degradation; glycolysis; pyruvate from D-glyceraldehyde 3-phosphate: step 4/5. Catalyzes the reversible conversion of 2-phosphoglycerate (2-PG) into phosphoenolpyruvate (PEP). It is essential for the degradation of carbohydrates via glycolysis. The sequence is that of Enolase from Salinibacter ruber (strain DSM 13855 / M31).